We begin with the raw amino-acid sequence, 572 residues long: Cytochrome P450 monooxygenase xilC (572 aa).

Cys-515 lines the heme pocket.

The protein belongs to the cytochrome P450 family. Requires heme as cofactor.

It participates in secondary metabolite biosynthesis. In terms of biological role, cytochrome P450 monooxygenase; part of the gene cluster that mediates the biosynthesis of the 6-methyl-2-pyrone derivative xylariolide D. XilC hydroxylates the 5-alkyl-6-methyl-2-pyrone backbone called prexylariolide D, produced by the highly reducing polyketide synthase xilA, on its side chain to form xylariolide D. The polypeptide is Cytochrome P450 monooxygenase xilC (Penicillium crustosum (Blue mold fungus)).